The chain runs to 255 residues: Thiazole synthase (255 aa).

Lys96 (schiff-base intermediate with DXP) is an active-site residue. Residues Gly157, 183–184, and 205–206 each bind 1-deoxy-D-xylulose 5-phosphate; these read AG and NS.

This sequence belongs to the ThiG family. Homotetramer. Forms heterodimers with either ThiH or ThiS.

It localises to the cytoplasm. It carries out the reaction [ThiS sulfur-carrier protein]-C-terminal-Gly-aminoethanethioate + 2-iminoacetate + 1-deoxy-D-xylulose 5-phosphate = [ThiS sulfur-carrier protein]-C-terminal Gly-Gly + 2-[(2R,5Z)-2-carboxy-4-methylthiazol-5(2H)-ylidene]ethyl phosphate + 2 H2O + H(+). It participates in cofactor biosynthesis; thiamine diphosphate biosynthesis. Its function is as follows. Catalyzes the rearrangement of 1-deoxy-D-xylulose 5-phosphate (DXP) to produce the thiazole phosphate moiety of thiamine. Sulfur is provided by the thiocarboxylate moiety of the carrier protein ThiS. In vitro, sulfur can be provided by H(2)S. This is Thiazole synthase from Staphylococcus carnosus (strain TM300).